Reading from the N-terminus, the 491-residue chain is (1S)-1-hydroxy-luvungin A synthase CYP88A37 (491 aa).

Residues 5-25 (FSWLILALAIFIGTYAFVFGV) form a helical membrane-spanning segment. Residue cysteine 439 coordinates heme.

Belongs to the cytochrome P450 family. Heme is required as a cofactor. As to expression, expressed in maturing fruits and in juice vesicles.

The protein resides in the membrane. It catalyses the reaction luvungin A + reduced [NADPH--hemoprotein reductase] + O2 = (1S)-1-hydroxy-luvungin A + oxidized [NADPH--hemoprotein reductase] + H2O + H(+). It participates in secondary metabolite biosynthesis; terpenoid biosynthesis. Functionally, monooxygenase involved in the biosynthesis of limonoids triterpene natural products such as limonin, a compound with insecticidal activity responsible for the bitter taste in citrus. Catalyzes the conversion of luvungin A to (1S)-1-hydroxy-luvungin A. This chain is (1S)-1-hydroxy-luvungin A synthase CYP88A37, found in Citrus sinensis (Sweet orange).